A 297-amino-acid chain; its full sequence is GTPase Era (297 aa).

The region spanning 7–174 (RSGFVSIVGR…VQLVHGLLPE (168 aa)) is the Era-type G domain. The tract at residues 15-22 (GRPNVGKS) is G1. 15-22 (GRPNVGKS) contacts GTP. A G2 region spans residues 41–45 (QTTRN). The G3 stretch occupies residues 62-65 (DTPG). GTP contacts are provided by residues 62 to 66 (DTPGI) and 124 to 127 (NKID). Positions 124 to 127 (NKID) are G4. Residues 153–155 (VSA) are G5. Positions 205-282 (THDEVPYSTA…FLELFVRVSG (78 aa)) constitute a KH type-2 domain.

Belongs to the TRAFAC class TrmE-Era-EngA-EngB-Septin-like GTPase superfamily. Era GTPase family. Monomer.

It localises to the cytoplasm. It is found in the cell inner membrane. Its function is as follows. An essential GTPase that binds both GDP and GTP, with rapid nucleotide exchange. Plays a role in 16S rRNA processing and 30S ribosomal subunit biogenesis and possibly also in cell cycle regulation and energy metabolism. This chain is GTPase Era, found in Geobacter sp. (strain M21).